The chain runs to 301 residues: Acetylglutamate kinase (301 aa).

Substrate contacts are provided by residues 68-69, R90, and N195; that span reads GG.

Belongs to the acetylglutamate kinase family. ArgB subfamily.

It localises to the cytoplasm. The enzyme catalyses N-acetyl-L-glutamate + ATP = N-acetyl-L-glutamyl 5-phosphate + ADP. It functions in the pathway amino-acid biosynthesis; L-arginine biosynthesis; N(2)-acetyl-L-ornithine from L-glutamate: step 2/4. Its function is as follows. Catalyzes the ATP-dependent phosphorylation of N-acetyl-L-glutamate. This Pseudomonas fluorescens (strain SBW25) protein is Acetylglutamate kinase.